Here is a 276-residue protein sequence, read N- to C-terminus: Dermonecrotic toxin LsaSicTox-alphaIB2iii (276 aa).

Histidine 5 is an active-site residue. Glutamate 25 and aspartate 27 together coordinate Mg(2+). Histidine 41 serves as the catalytic Nucleophile. 2 disulfides stabilise this stretch: cysteine 45-cysteine 51 and cysteine 47-cysteine 190. Aspartate 85 is a Mg(2+) binding site. Residues asparagine 129 and asparagine 253 are each glycosylated (N-linked (GlcNAc...) asparagine).

The protein belongs to the arthropod phospholipase D family. Class II subfamily. Mg(2+) is required as a cofactor. In terms of tissue distribution, expressed by the venom gland.

Its subcellular location is the secreted. The enzyme catalyses an N-(acyl)-sphingosylphosphocholine = an N-(acyl)-sphingosyl-1,3-cyclic phosphate + choline. It catalyses the reaction an N-(acyl)-sphingosylphosphoethanolamine = an N-(acyl)-sphingosyl-1,3-cyclic phosphate + ethanolamine. It carries out the reaction a 1-acyl-sn-glycero-3-phosphocholine = a 1-acyl-sn-glycero-2,3-cyclic phosphate + choline. The catalysed reaction is a 1-acyl-sn-glycero-3-phosphoethanolamine = a 1-acyl-sn-glycero-2,3-cyclic phosphate + ethanolamine. Dermonecrotic toxins cleave the phosphodiester linkage between the phosphate and headgroup of certain phospholipids (sphingolipid and lysolipid substrates), forming an alcohol (often choline) and a cyclic phosphate. This toxin acts on sphingomyelin (SM). It may also act on ceramide phosphoethanolamine (CPE), lysophosphatidylcholine (LPC) and lysophosphatidylethanolamine (LPE), but not on lysophosphatidylserine (LPS), and lysophosphatidylglycerol (LPG). It acts by transphosphatidylation, releasing exclusively cyclic phosphate products as second products. Induces dermonecrosis, hemolysis, increased vascular permeability, edema, inflammatory response, and platelet aggregation. This chain is Dermonecrotic toxin LsaSicTox-alphaIB2iii, found in Loxosceles sabina (Tucson recluse spider).